A 191-amino-acid chain; its full sequence is MAAYSYRPGPGAGPGPAAGAALPDQSFLWNVFQRVDKDRSGVISDTELQQALSNGTWTPFNPVTVRSIISMFDRENKAGVNFSEFTGVWKYITDWQNVFRTYDRDNSGMIDKNELKQALSGFGYRLSDQFHDILIRKFDRQGRGQIAFDDFIQGCIVLQRLTDIFRRYDTDQDGWIQVSYEQYLSMVFSIV.

The residue at position 2 (Ala-2) is an N-acetylalanine. EF-hand domains lie at 23-58, 59-89, 90-125, 126-161, and 162-191; these read PDQS…GTWT, PFNP…TGVW, KYIT…FGYR, LSDQ…LQRL, and TDIF…FSIV. Residues Asp-36, Asp-38, Ser-40, Val-42, and Glu-47 each contribute to the Ca(2+) site. Positions 103, 105, 107, 109, and 114 each coordinate Ca(2+). Asp-169, Asp-171, Asp-173, and Trp-175 together coordinate Mg(2+).

As to quaternary structure, homodimer and heterodimer; heterodimerizes (via the EF-hand 5) with PEF1. Isoform 1 and isoform 2 self-associate; probably forming homodimers. Interacts with CPNE4 (via VWFA domain). Interacts with PDCD6IP; the interaction is calcium-dependent. Interacts with RBM22. Interacts with PLSCR4. Interacts with ANXA7 and TSG101. Interacts with DAPK1. Interacts with SEC31A; the interaction is calcium-dependent and promotes monoubiquitination of SEC31A. Interacts with ANXA11 (via N-terminus); the interaction is calcium-dependent. Interacts with PLSCR3 (via N-terminus); the interaction is calcium-dependent. Interacts with MCOLN1; the interaction is calcium-dependent. Interacts with KDR; the interaction is calcium-dependent. Interacts with HEBP2; the interaction is calcium-dependent. Interacts with TFG. Isoform 1: Interacts with SHISA5, leading to stabilize it. Isoform 2: Does not interact with SHISA5. Isoform 2: Does not interact with PDCD6IP, TSG101, ANXA7 and ANXA11.

It localises to the endoplasmic reticulum membrane. It is found in the cytoplasmic vesicle. Its subcellular location is the COPII-coated vesicle membrane. The protein resides in the cytoplasm. The protein localises to the nucleus. It localises to the endosome. Its function is as follows. Calcium sensor that plays a key role in processes such as endoplasmic reticulum (ER)-Golgi vesicular transport, endosomal biogenesis or membrane repair. Acts as an adapter that bridges unrelated proteins or stabilizes weak protein-protein complexes in response to calcium: calcium-binding triggers exposure of apolar surface, promoting interaction with different sets of proteins thanks to 3 different hydrophobic pockets, leading to translocation to membranes. Involved in ER-Golgi transport by promoting the association between PDCD6IP and TSG101, thereby bridging together the ESCRT-III and ESCRT-I complexes. Together with PEF1, acts as a calcium-dependent adapter for the BCR(KLHL12) complex, a complex involved in ER-Golgi transport by regulating the size of COPII coats. In response to cytosolic calcium increase, the heterodimer formed with PEF1 interacts with, and bridges together the BCR(KLHL12) complex and SEC31 (SEC31A or SEC31B), promoting monoubiquitination of SEC31 and subsequent collagen export, which is required for neural crest specification. Involved in the regulation of the distribution and function of MCOLN1 in the endosomal pathway. Promotes localization and polymerization of TFG at endoplasmic reticulum exit site. Required for T-cell receptor-, Fas-, and glucocorticoid-induced apoptosis. May mediate Ca(2+)-regulated signals along the death pathway: interaction with DAPK1 can accelerate apoptotic cell death by increasing caspase-3 activity. Its role in apoptosis may however be indirect, as suggested by knockout experiments. May inhibit KDR/VEGFR2-dependent angiogenesis; the function involves inhibition of VEGF-induced phosphorylation of the Akt signaling pathway. In case of infection by HIV-1 virus, indirectly inhibits HIV-1 production by affecting viral Gag expression and distribution. Functionally, has a lower Ca(2+) affinity than isoform 1. The sequence is that of Programmed cell death protein 6 (PDCD6) from Homo sapiens (Human).